Here is a 523-residue protein sequence, read N- to C-terminus: Lysine--tRNA ligase (523 aa).

A 'HIGH' region motif is present at residues 30–38; the sequence is PSGYVHVGN. Zn(2+) contacts are provided by D95, C99, H100, H106, C177, H180, C199, and H203. The 'KMSKS' region signature appears at 279–283; that stretch reads KMSGS.

This sequence belongs to the class-I aminoacyl-tRNA synthetase family. The cofactor is Zn(2+).

It is found in the cytoplasm. It carries out the reaction tRNA(Lys) + L-lysine + ATP = L-lysyl-tRNA(Lys) + AMP + diphosphate. In Pyrococcus horikoshii (strain ATCC 700860 / DSM 12428 / JCM 9974 / NBRC 100139 / OT-3), this protein is Lysine--tRNA ligase (lysS).